The chain runs to 308 residues: Cilia- and flagella-associated protein 73 (308 aa).

Coiled-coil stretches lie at residues 34–143 (RLLE…LEPC) and 175–233 (AALR…WESK).

This sequence belongs to the CFAP73 family.

The protein localises to the cytoplasm. It localises to the cytoskeleton. The protein resides in the cilium axoneme. In terms of biological role, may play a role in ciliary/flagellar motility by regulating the assembly and the activity of axonemal inner dynein arm. This Homo sapiens (Human) protein is Cilia- and flagella-associated protein 73.